The primary structure comprises 962 residues: MPKLSRRSRILLILGGVVLIALIAGSRLLGTYVDWLWFGEVGRRQVFATQVFSRLGLGVAAGAFVGVVLLLNLWIAYRSRPVFVPVSGPDDPLARYRTVATERSRLFGWGIPIVIAVIAGLTAQSDWQTLQLFLHSVPFGQVDPEFGNDISFYTFQLPFWRFLLSWSFVAITVGFIGALVTHYIFGGIRLAGRSGQVAAPARIQLSVLAGLFVLLKAVDYFLDRYDLLLSDRNSLFTGATYTDLNALMPVKLILMIIAVFCALAFFAAIFLRNLQIPAIATVLLVLSSILVGSVWPALLEQFSVRPNANQREALSIERNLAATRSAFGIGADKVTIKDYPGKTALTPGEVADDEGTIPNIRLLDPNVLSDTFTQLTQQYNFYGFNEKLDVDRYREPNGQLRDYLVALREIDTDGLAQNQQSWINRHMVYTHGNGFIAAPADRVDSTFQEGATQGGYPVFQISDVANGGKGAIPVDNPRVYYGELLNQNDYAIVGGNPGEAPREYDTDRSAYTYAGKGGVPLGSFFNRLVFAGYYGERNFLFNTAIGSDSKIMYERNPRDRVQKVAPWLKLDGDPYPAVVDGKVKWIIDGYTTLDNYPYSQQTQFGQATTDTLTGVERQPNQPINYIRNSVKATVDAYDGSVDLYAVDEKDPVLKAWQGVFPGVVKPAKEISPQLQEHFRYPEDLFKVQRQLLTQYHVTNPGDFFSNRTFWEVPPDPTSSGQGGSNQGNQQPPYYVLAQIEGQNQPTFQLTSALTALKRQNLAAWVSASSDPRDYGKLTVLRLPTDTQTPGPNQVQNQMESTPEVTENRTLFNNPQVTAIFGNLLTLPVAGGLLYVEPIYIQRNETESYPQLARVLVSFGGKVGFSETLAGALEQVFGPGAGQTAGDEPPPGQDSNQPPGQQPPTQQPPAGSPEMTKAVADIRTALESVRSAQQSGNFGRLGAAYQQLDEALKRFEQLGGTGG.

The next 7 membrane-spanning stretches (helical) occupy residues 10 to 30 (ILLILGGVVLIALIAGSRLLG), 55 to 75 (LGLGVAAGAFVGVVLLLNLWI), 106 to 126 (LFGWGIPIVIAVIAGLTAQSD), 168 to 188 (FVAITVGFIGALVTHYIFGGI), 203 to 223 (IQLSVLAGLFVLLKAVDYFLD), 250 to 270 (VKLILMIIAVFCALAFFAAIF), and 279 to 299 (IATVLLVLSSILVGSVWPALL). Disordered regions lie at residues 707–730 (RTFWEVPPDPTSSGQGGSNQGNQQ) and 876–916 (FGPG…EMTK). The span at 899–910 (GQQPPTQQPPAG) shows a compositional bias: pro residues.

It belongs to the UPF0182 family.

Its subcellular location is the cell membrane. The protein is UPF0182 protein SACE_1102 of Saccharopolyspora erythraea (strain ATCC 11635 / DSM 40517 / JCM 4748 / NBRC 13426 / NCIMB 8594 / NRRL 2338).